We begin with the raw amino-acid sequence, 168 residues long: Transmembrane protein 229b (168 aa).

The Cytoplasmic segment spans residues 1-14; it reads MAPPEPLTALSRWY. The helical transmembrane segment at 15 to 35 threads the bilayer; that stretch reads LYAIHGYFCEVMFTAAWDFVV. The Extracellular segment spans residues 36–40; that stretch reads NYNWK. The helical transmembrane segment at 41-61 threads the bilayer; it reads FPGVTSVWALFIYGTSILIVE. Residues 62-72 lie on the Cytoplasmic side of the membrane; it reads KMYLYLKDKCN. Residues 73–93 form a helical membrane-spanning segment; sequence ILIRCLIYTLWTYIWEFSTGL. The Extracellular segment spans residues 94-109; it reads ILRQFNACPWDYSQFD. Residues 110-130 form a helical membrane-spanning segment; sequence FDFMGLITLEYAIPWFCASFI. At 131–168 the chain is on the cytoplasmic side; it reads MEQLVIRNTLRLRFDEHAEPGSPVMSTVSMANGHVKCN.

The protein belongs to the TMEM229 family.

Its subcellular location is the membrane. In Xenopus tropicalis (Western clawed frog), this protein is Transmembrane protein 229b (tmem229b).